A 128-amino-acid chain; its full sequence is Small ribosomal subunit protein uS11 (128 aa).

Belongs to the universal ribosomal protein uS11 family. In terms of assembly, part of the 30S ribosomal subunit. Interacts with proteins S7 and S18. Binds to IF-3.

Located on the platform of the 30S subunit, it bridges several disparate RNA helices of the 16S rRNA. Forms part of the Shine-Dalgarno cleft in the 70S ribosome. In Desulforudis audaxviator (strain MP104C), this protein is Small ribosomal subunit protein uS11.